We begin with the raw amino-acid sequence, 496 residues long: UDP-glycosyltransferase 73C4 (496 aa).

UDP-alpha-D-glucose-binding positions include Ser-297, 357 to 359 (SPQ), 374 to 382 (HCGWNSTLE), and 396 to 399 (FGDQ). The interval 450–475 (SDDAKERRRRVKELGESAHKAVEEGG) is disordered. Residues 451 to 472 (DDAKERRRRVKELGESAHKAVE) show a composition bias toward basic and acidic residues.

This sequence belongs to the UDP-glycosyltransferase family.

The protein is UDP-glycosyltransferase 73C4 (UGT73C4) of Arabidopsis thaliana (Mouse-ear cress).